Here is a 79-residue protein sequence, read N- to C-terminus: D-alanyl carrier protein (79 aa).

The Carrier domain maps to 1 to 77; sequence MDVKETILNI…KIISGVVELM (77 aa). Residue Ser35 is modified to O-(pantetheine 4'-phosphoryl)serine.

It belongs to the DltC family. 4'-phosphopantetheine is transferred from CoA to a specific serine of apo-DCP.

It is found in the cytoplasm. It functions in the pathway cell wall biogenesis; lipoteichoic acid biosynthesis. In terms of biological role, carrier protein involved in the D-alanylation of lipoteichoic acid (LTA). The loading of thioester-linked D-alanine onto DltC is catalyzed by D-alanine--D-alanyl carrier protein ligase DltA. The DltC-carried D-alanyl group is further transferred to cell membrane phosphatidylglycerol (PG) by forming an ester bond, probably catalyzed by DltD. D-alanylation of LTA plays an important role in modulating the properties of the cell wall in Gram-positive bacteria, influencing the net charge of the cell wall. The polypeptide is D-alanyl carrier protein (Streptococcus suis (strain 05ZYH33)).